The following is a 664-amino-acid chain: Protein-arginine deiminase type-3 (664 aa).

The protein belongs to the protein arginine deiminase family. Ca(2+) serves as cofactor. As to expression, hair follicles, and epidermis at very low levels.

The protein localises to the cytoplasm. It catalyses the reaction L-arginyl-[protein] + H2O = L-citrullyl-[protein] + NH4(+). Functionally, catalyzes the deimination of arginine residues of proteins. This is Protein-arginine deiminase type-3 (PADI3) from Homo sapiens (Human).